Here is a 335-residue protein sequence, read N- to C-terminus: tRNA (guanine(6)-N2)-methyltransferase (335 aa).

In terms of domain architecture, THUMP spans E47–L150. S-adenosyl-L-methionine contacts are provided by residues S195–T197, D243–A244, and N260.

It belongs to the methyltransferase superfamily. In terms of assembly, monomer in solution.

Its subcellular location is the cytoplasm. The enzyme catalyses guanosine(6) in tRNA + S-adenosyl-L-methionine = N(2)-methylguanosine(6) in tRNA + S-adenosyl-L-homocysteine + H(+). Its function is as follows. S-adenosyl-L-methionine-dependent methyltransferase that catalyzes the methylation of the guanosine nucleotide at position 6 (m2G6) in tRNA(Phe). This chain is tRNA (guanine(6)-N2)-methyltransferase, found in Thermus thermophilus (strain ATCC BAA-163 / DSM 7039 / HB27).